A 166-amino-acid chain; its full sequence is NAD(P)H-quinone oxidoreductase subunit I, chloroplastic (166 aa).

4Fe-4S ferredoxin-type domains follow at residues 55–84 (GRIH…VDWK) and 95–124 (LNYS…MTEE). Residues Cys64, Cys67, Cys70, Cys74, Cys104, Cys107, Cys110, and Cys114 each contribute to the [4Fe-4S] cluster site.

Belongs to the complex I 23 kDa subunit family. In terms of assembly, NDH is composed of at least 16 different subunits, 5 of which are encoded in the nucleus. Requires [4Fe-4S] cluster as cofactor.

It is found in the plastid. Its subcellular location is the chloroplast thylakoid membrane. It carries out the reaction a plastoquinone + NADH + (n+1) H(+)(in) = a plastoquinol + NAD(+) + n H(+)(out). The catalysed reaction is a plastoquinone + NADPH + (n+1) H(+)(in) = a plastoquinol + NADP(+) + n H(+)(out). Functionally, NDH shuttles electrons from NAD(P)H:plastoquinone, via FMN and iron-sulfur (Fe-S) centers, to quinones in the photosynthetic chain and possibly in a chloroplast respiratory chain. The immediate electron acceptor for the enzyme in this species is believed to be plastoquinone. Couples the redox reaction to proton translocation, and thus conserves the redox energy in a proton gradient. This Polymnia canadensis (White-flowered leaf-cup) protein is NAD(P)H-quinone oxidoreductase subunit I, chloroplastic.